The chain runs to 293 residues: Nucleotide-binding protein BA_5384/GBAA_5384/BAS5004 (293 aa).

14–21 is a binding site for ATP; that stretch reads GMSGAGKT. 65–68 provides a ligand contact to GTP; the sequence is DLRG.

The protein belongs to the RapZ-like family.

In terms of biological role, displays ATPase and GTPase activities. The polypeptide is Nucleotide-binding protein BA_5384/GBAA_5384/BAS5004 (Bacillus anthracis).